Here is a 457-residue protein sequence, read N- to C-terminus: D-hydantoinase (457 aa).

Positions 57 and 59 each coordinate Zn(2+). A Phosphoserine modification is found at serine 69. A Zn(2+)-binding site is contributed by lysine 148. Lysine 148 carries the N6-carboxylysine modification. Residue tyrosine 153 participates in substrate binding. Zn(2+) is bound by residues histidine 181 and histidine 237. Substrate is bound at residue threonine 286. Aspartate 313 serves as a coordination point for Zn(2+). Asparagine 335 is a substrate binding site.

This sequence belongs to the metallo-dependent hydrolases superfamily. Hydantoinase/dihydropyrimidinase family. Homotetramer. Requires Zn(2+) as cofactor. Post-translationally, carboxylation allows a single lysine to coordinate two zinc ions.

In terms of biological role, catalyzes the stereospecific hydrolysis of the cyclic amide bond of D-hydantoin derivatives. The sequence is that of D-hydantoinase (hyuA) from Rhizobium radiobacter (Agrobacterium tumefaciens).